The primary structure comprises 376 residues: Putative 12-oxophytodienoate reductase 13 (376 aa).

Residues 25 to 27 (PLT), Ala58, and Gln99 each bind FMN. Residue 165 to 168 (HGAH) coordinates substrate. Residues Arg217, Gly301, and 322–323 (GR) each bind FMN.

The protein belongs to the NADH:flavin oxidoreductase/NADH oxidase family. It depends on FMN as a cofactor.

Its function is as follows. Putative oxophytodienoate reductase that may be involved in the biosynthesis or metabolism of oxylipin signaling molecules. This chain is Putative 12-oxophytodienoate reductase 13 (OPR13), found in Oryza sativa subsp. japonica (Rice).